Here is a 159-residue protein sequence, read N- to C-terminus: Ribosomal RNA large subunit methyltransferase H (159 aa).

S-adenosyl-L-methionine-binding positions include leucine 76, glycine 108, and 127–132 (FGRMTY).

The protein belongs to the RNA methyltransferase RlmH family. In terms of assembly, homodimer.

It is found in the cytoplasm. The enzyme catalyses pseudouridine(1915) in 23S rRNA + S-adenosyl-L-methionine = N(3)-methylpseudouridine(1915) in 23S rRNA + S-adenosyl-L-homocysteine + H(+). In terms of biological role, specifically methylates the pseudouridine at position 1915 (m3Psi1915) in 23S rRNA. This chain is Ribosomal RNA large subunit methyltransferase H, found in Carboxydothermus hydrogenoformans (strain ATCC BAA-161 / DSM 6008 / Z-2901).